The chain runs to 217 residues: Octanoyltransferase (217 aa).

Positions 32–207 constitute a BPL/LPL catalytic domain; the sequence is DDSADEIWLV…HMIKKLNATQ (176 aa). Substrate contacts are provided by residues 71 to 78, 138 to 140, and 151 to 153; these read RGGQVTYH, SLG, and GLA. Catalysis depends on Cys-169, which acts as the Acyl-thioester intermediate.

The protein belongs to the LipB family.

The protein resides in the cytoplasm. The catalysed reaction is octanoyl-[ACP] + L-lysyl-[protein] = N(6)-octanoyl-L-lysyl-[protein] + holo-[ACP] + H(+). It functions in the pathway protein modification; protein lipoylation via endogenous pathway; protein N(6)-(lipoyl)lysine from octanoyl-[acyl-carrier-protein]: step 1/2. Functionally, catalyzes the transfer of endogenously produced octanoic acid from octanoyl-acyl-carrier-protein onto the lipoyl domains of lipoate-dependent enzymes. Lipoyl-ACP can also act as a substrate although octanoyl-ACP is likely to be the physiological substrate. This Pseudoalteromonas translucida (strain TAC 125) protein is Octanoyltransferase.